The following is a 2026-amino-acid chain: E3 ubiquitin-protein ligase TRIP12 (2026 aa).

3 stretches are compositionally biased toward polar residues: residues 1-10 (MSNRPNSNPG), 32-42 (GRNSLSLSVGS), and 73-84 (SSVSEPNITFSP). Positions 1–437 (MSNRPNSNPG…SGESESDDSE (437 aa)) are disordered. Composition is skewed to low complexity over residues 94–112 (SSHF…AISP), 135–161 (AEPA…STPS), 171–188 (LLSS…SAAG), and 199–241 (AAKP…SSAA). The segment covering 359–371 (QKTTGSCASTSRR) has biased composition (polar residues). Residues 379 to 391 (GAAEARRQEKMAD) are compositionally biased toward basic and acidic residues. A compositionally biased stretch (polar residues) spans 392–404 (SDNNQDGANSSAA). Residues 412–430 (GASASSSVAGAVGMTTSGE) show a composition bias toward low complexity. The region spanning 789-876 (MLKKGSAQTT…DPELAKCFIK (88 aa)) is the WWE domain. Disordered stretches follow at residues 1008 to 1123 (SNVT…SVSN) and 1441 to 1470 (GCKD…KQDE). Basic residues predominate over residues 1040-1053 (KRKRLPKRGPRRPK). Residues 1056–1065 (PPRDDDKVDN) show a composition bias toward basic and acidic residues. A compositionally biased stretch (low complexity) spans 1068 to 1079 (KSPTTTQSPKSS). Over residues 1094–1104 (TQANSANSEPS) the composition is skewed to polar residues. The K-box stretch occupies residues 1530-1604 (EIIPTGEFIN…AMQRLLDTNP (75 aa)). An HECT domain is found at 1919 to 2026 (PDHGYTHDSR…REGQQSFHLS (108 aa)). Residue C1993 is the Glycyl thioester intermediate of the active site.

This sequence belongs to the UPL family. K-HECT subfamily.

The protein resides in the nucleus. It localises to the nucleoplasm. It carries out the reaction S-ubiquitinyl-[E2 ubiquitin-conjugating enzyme]-L-cysteine + [acceptor protein]-L-lysine = [E2 ubiquitin-conjugating enzyme]-L-cysteine + N(6)-ubiquitinyl-[acceptor protein]-L-lysine.. The protein operates within protein modification; protein ubiquitination. Its function is as follows. E3 ubiquitin-protein ligase involved in ubiquitin fusion degradation (UFD) pathway and regulation of DNA repair. Part of the ubiquitin fusion degradation (UFD) pathway, a process that mediates ubiquitination of protein at their N-terminus, regardless of the presence of lysine residues in target proteins. Acts as a key regulator of DNA damage response by acting as a suppressor of RNF168, an E3 ubiquitin-protein ligase that promotes accumulation of 'Lys-63'-linked histone H2A and H2AX at DNA damage sites, thereby acting as a guard against excessive spreading of ubiquitinated chromatin at damaged chromosomes. This Danio rerio (Zebrafish) protein is E3 ubiquitin-protein ligase TRIP12 (trip12).